Consider the following 50-residue polypeptide: Large ribosomal subunit protein bL33 (50 aa).

This sequence belongs to the bacterial ribosomal protein bL33 family.

The polypeptide is Large ribosomal subunit protein bL33 (Koribacter versatilis (strain Ellin345)).